Reading from the N-terminus, the 495-residue chain is NAD(+)--protein-arginine ADP-ribosyltransferase Tre1 (495 aa).

Residues 278–309 (PDLQIKGPTPVKKPEPLQPARQPEKASAPKPV) form a disordered region. Positions 315-495 (MSLREAVGNQ…VTQFILKEIP (181 aa)) constitute a TR mART core domain. The ART domain stretch occupies residues 344–495 (RSALLTDDQI…VTQFILKEIP (152 aa)). Residues Arg406, Ser431, and Glu466 contribute to the active site.

This sequence belongs to the Arg-specific ADP-ribosyltransferase family.

It is found in the secreted. It localises to the host cytoplasm. It catalyses the reaction L-arginyl-[protein] + NAD(+) = N(omega)-(ADP-D-ribosyl)-L-arginyl-[protein] + nicotinamide + H(+). In terms of biological role, toxic component of a contact-dependent interbacterial competition system (also called effector-immunity systems). Acts by ADP-ribosylating a number of target proteins in target cells; E.coli target proteins include FtsZ, EFTu, RNase E, Fis, YegQ, GuaB and IF2. This chain is NAD(+)--protein-arginine ADP-ribosyltransferase Tre1, found in Pseudomonas putida (strain GB-1).